The primary structure comprises 466 residues: MTQAAAPQPWSDRFETALHPAIVVFNASIGFDLALIEYDLTGSQAHAQMLAEQDIISREEGEAIVAGLEQIRSEYRTGQFQPGLDAEDVHFAVERRLTELLGDVGKKLHTARSRNDQVGTDTRLYLRDRVDHIRQQLRDYQRVLLSQAEQHLETLIPGYTHLQRAQPLSLAHHLHAYLEMAERDWERLGDLRKRLNTSPLGAGALAGTTFPIDRQRTAALLGFERIYANSLDAVSDRDSLVEFLAAASLIMVHLSRLAEEVILWASEEFRFVRLSDRCATGSSIMPQKKNPDVPELVRGKTGRVFGHLQALLVVLKGLPLAYNKDLQEDKEGLFDAVQTVESCLEAMTILFAEGLSFQPDRLAAAVEADFSNATDVADYLAARGVPFREAYNLVGRVVRTCLEQGKLLKDLSLAEWQALHPQFEADIYTAIAPQQVVAARNSLGGTGFEQVRSALASVRQRLEATC.

This sequence belongs to the lyase 1 family. Argininosuccinate lyase subfamily.

Its subcellular location is the cytoplasm. The catalysed reaction is 2-(N(omega)-L-arginino)succinate = fumarate + L-arginine. Its pathway is amino-acid biosynthesis; L-arginine biosynthesis; L-arginine from L-ornithine and carbamoyl phosphate: step 3/3. The polypeptide is Argininosuccinate lyase (Synechococcus elongatus (strain ATCC 33912 / PCC 7942 / FACHB-805) (Anacystis nidulans R2)).